The primary structure comprises 676 residues: Protein kinase C delta type (676 aa).

One can recognise a C2 domain in the interval 1–106 (MAPFLRIAFN…KNNGKAEFWL (106 aa)). 2 positions are modified to phosphothreonine: Thr43 and Thr50. Tyr64 is modified (phosphotyrosine). Ser130 carries the post-translational modification Phosphoserine. At Thr141 the chain carries Phosphothreonine. Tyr155 is subject to Phosphotyrosine. The Phorbol-ester/DAG-type 1 zinc-finger motif lies at 158–208 (NHEFIATFFGQPTFCSVCKDFVWGLNKQGYKCRQCNAAIHKKCIDKIIGRC). Position 218 is a phosphothreonine (Thr218). The Phorbol-ester/DAG-type 2 zinc-finger motif lies at 230–280 (PHRFKVHNYMSPTFCDHCGSLLWGLVKQGLKCEDCGMNVHHKCREKVANLC). 3 positions are modified to phosphoserine; by autocatalysis: Ser299, Ser302, and Ser304. A Phosphoserine modification is found at Ser307. A Phosphotyrosine modification is found at Tyr313. A Phosphotyrosine; by SRC modification is found at Tyr334. The Protein kinase domain maps to 349 to 603 (FIFHKVLGKG…TGNIKIHPFF (255 aa)). 355–363 (LGKGSFGKV) serves as a coordination point for ATP. At Tyr374 the chain carries Phosphotyrosine. Lys378 is a binding site for ATP. Thr451 bears the Phosphothreonine mark. Asp473 (proton acceptor) is an active-site residue. Phosphoserine is present on residues Ser503 and Ser506. Thr507 carries the post-translational modification Phosphothreonine; by autocatalysis. Tyr567 is modified (phosphotyrosine). The AGC-kinase C-terminal domain maps to 604–675 (KTINWTLLEK…VNPKFEHLLE (72 aa)). Phosphoserine occurs at positions 645, 654, 658, and 664.

Belongs to the protein kinase superfamily. AGC Ser/Thr protein kinase family. PKC subfamily. Interacts with PDPK1 (via N-terminal region). Interacts with RAD9A. Interacts with CDCP1. Interacts with MUC1. Interacts with VASP. Interacts with CAVIN3. Interacts with PRKD2 (via N-terminus and zing-finger domain 1 and 2) in response to oxidative stress; the interaction is independent of PRKD2 tyrosine phosphorylation. Interacts with PLSC3; interaction is enhanced by UV irradiation. Interacts with PRKCH upstream open reading frame 2; the interaction leads to inhibition of kinase activity. Post-translationally, autophosphorylated and/or phosphorylated at Thr-507, within the activation loop; phosphorylation at Thr-507 is not a prerequisite for enzymatic activity. Autophosphorylated at Ser-299, Ser-302 and Ser-304. Upon TNFSF10/TRAIL treatment, phosphorylated at Tyr-155; phosphorylation is required for its translocation to the endoplasmic reticulum and cleavage by caspase-3. Phosphorylated at Tyr-313, Tyr-334 and Tyr-567; phosphorylation of Tyr-313 and Tyr-567 following thrombin or zymosan stimulation potentiates its kinase activity. Phosphorylated by protein kinase PDPK1; phosphorylation is inhibited by the apoptotic C-terminal cleavage product of PKN2. Phosphorylated at Tyr-313 through a SYK and SRC mechanism downstream of C-type lectin receptors activation, promoting its activation. Proteolytically cleaved into a catalytic subunit and a regulatory subunit by caspase-3 during apoptosis which results in kinase activation.

The protein localises to the cytoplasm. It is found in the perinuclear region. The protein resides in the nucleus. It localises to the cell membrane. Its subcellular location is the mitochondrion. The protein localises to the endomembrane system. It carries out the reaction L-seryl-[protein] + ATP = O-phospho-L-seryl-[protein] + ADP + H(+). It catalyses the reaction L-threonyl-[protein] + ATP = O-phospho-L-threonyl-[protein] + ADP + H(+). The catalysed reaction is L-tyrosyl-[protein] + ATP = O-phospho-L-tyrosyl-[protein] + ADP + H(+). With respect to regulation, novel PKCs (PRKCD, PRKCE, PRKCH and PRKCQ) are calcium-insensitive, but activated by diacylglycerol (DAG) and phosphatidylserine. Three specific sites; Thr-507 (activation loop of the kinase domain), Ser-645 (turn motif) and Ser-664 (hydrophobic region), need to be phosphorylated for its full activation. Activated by caspase-3 (CASP3) cleavage during apoptosis. After cleavage, the pseudosubstrate motif in the regulatory subunit is released from the substrate recognition site of the catalytic subunit, which enables PRKCD to become constitutively activated. The catalytic subunit which displays properties of a sphingosine-dependent protein kinase is activated by D-erythro-sphingosine (Sph) or N,N-dimethyl-D-erythrosphingosine (DMS) or N,N,N-trimethyl-D-erythrosphingosine (TMS), but not by ceramide or Sph-1-P and is strongly inhibited by phosphatidylserine. Inhibited by PRKCH upstream open reading frame 2. In terms of biological role, calcium-independent, phospholipid- and diacylglycerol (DAG)-dependent serine/threonine-protein kinase that plays contrasting roles in cell death and cell survival by functioning as a pro-apoptotic protein during DNA damage-induced apoptosis, but acting as an anti-apoptotic protein during cytokine receptor-initiated cell death, is involved in tumor suppression as well as survival of several cancers, is required for oxygen radical production by NADPH oxidase and acts as positive or negative regulator in platelet functional responses. Negatively regulates B cell proliferation and also has an important function in self-antigen induced B cell tolerance induction. Upon DNA damage, activates the promoter of the death-promoting transcription factor BCLAF1/Btf to trigger BCLAF1-mediated p53/TP53 gene transcription and apoptosis. In response to oxidative stress, interact with and activate CHUK/IKKA in the nucleus, causing the phosphorylation of p53/TP53. In the case of ER stress or DNA damage-induced apoptosis, can form a complex with the tyrosine-protein kinase ABL1 which trigger apoptosis independently of p53/TP53. In cytosol can trigger apoptosis by activating MAPK11 or MAPK14, inhibiting AKT1 and decreasing the level of X-linked inhibitor of apoptosis protein (XIAP), whereas in nucleus induces apoptosis via the activation of MAPK8 or MAPK9. Upon ionizing radiation treatment, is required for the activation of the apoptosis regulators BAX and BAK, which trigger the mitochondrial cell death pathway. Can phosphorylate MCL1 and target it for degradation which is sufficient to trigger for BAX activation and apoptosis. Is required for the control of cell cycle progression both at G1/S and G2/M phases. Mediates phorbol 12-myristate 13-acetate (PMA)-induced inhibition of cell cycle progression at G1/S phase by up-regulating the CDK inhibitor CDKN1A/p21 and inhibiting the cyclin CCNA2 promoter activity. In response to UV irradiation can phosphorylate CDK1, which is important for the G2/M DNA damage checkpoint activation. Can protect glioma cells from the apoptosis induced by TNFSF10/TRAIL, probably by inducing increased phosphorylation and subsequent activation of AKT1. Is highly expressed in a number of cancer cells and promotes cell survival and resistance against chemotherapeutic drugs by inducing cyclin D1 (CCND1) and hyperphosphorylation of RB1, and via several pro-survival pathways, including NF-kappa-B, AKT1 and MAPK1/3 (ERK1/2). Involved in antifungal immunity by mediating phosphorylation and activation of CARD9 downstream of C-type lectin receptors activation, promoting interaction between CARD9 and BCL10, followed by activation of NF-kappa-B and MAP kinase p38 pathways. Can also act as tumor suppressor upon mitogenic stimulation with PMA or TPA. In N-formyl-methionyl-leucyl-phenylalanine (fMLP)-treated cells, is required for NCF1 (p47-phox) phosphorylation and activation of NADPH oxidase activity, and regulates TNF-elicited superoxide anion production in neutrophils, by direct phosphorylation and activation of NCF1 or indirectly through MAPK1/3 (ERK1/2) signaling pathways. May also play a role in the regulation of NADPH oxidase activity in eosinophil after stimulation with IL5, leukotriene B4 or PMA. In collagen-induced platelet aggregation, acts a negative regulator of filopodia formation and actin polymerization by interacting with and negatively regulating VASP phosphorylation. Downstream of PAR1, PAR4 and CD36/GP4 receptors, regulates differentially platelet dense granule secretion; acts as a positive regulator in PAR-mediated granule secretion, whereas it negatively regulates CD36/GP4-mediated granule release. Phosphorylates MUC1 in the C-terminal and regulates the interaction between MUC1 and beta-catenin. The catalytic subunit phosphorylates 14-3-3 proteins (YWHAB, YWHAZ and YWHAH) in a sphingosine-dependent fashion. Phosphorylates ELAVL1 in response to angiotensin-2 treatment. Phosphorylates mitochondrial phospholipid scramblase 3 (PLSCR3), resulting in increased cardiolipin expression on the mitochondrial outer membrane which facilitates apoptosis. Phosphorylates SMPD1 which induces SMPD1 secretion. The protein is Protein kinase C delta type of Homo sapiens (Human).